Reading from the N-terminus, the 155-residue chain is MRKSAAPKRPVVKDPVYDSELVTQLVNKILLDGKKSTAERIVYGALEICREKTGLEPVGTLEKALGNVRPDLEVRSRRVGGATYQVPVEVRPARATTLALRWLVTFTRQRRENTMVERLANEIMDAANGLGASVKRREDTHKMAEANRAFAHYRW.

The protein belongs to the universal ribosomal protein uS7 family. Part of the 30S ribosomal subunit. Contacts proteins S9 and S11.

In terms of biological role, one of the primary rRNA binding proteins, it binds directly to 16S rRNA where it nucleates assembly of the head domain of the 30S subunit. Is located at the subunit interface close to the decoding center, probably blocks exit of the E-site tRNA. The protein is Small ribosomal subunit protein uS7 of Corynebacterium efficiens (strain DSM 44549 / YS-314 / AJ 12310 / JCM 11189 / NBRC 100395).